The chain runs to 185 residues: Ribosome-recycling factor (185 aa).

It belongs to the RRF family.

Its subcellular location is the cytoplasm. In terms of biological role, responsible for the release of ribosomes from messenger RNA at the termination of protein biosynthesis. May increase the efficiency of translation by recycling ribosomes from one round of translation to another. This Streptococcus pneumoniae serotype 19F (strain G54) protein is Ribosome-recycling factor.